Reading from the N-terminus, the 502-residue chain is MTEKKYIVALDQGTTSSRAVVMDHDANIISVSQREFEQIYPKPGWVEHDPMEIWATQSSTLVEVLAKADISSDQIAAIGITNQRETTIVWEKETGKPIYNAIVWQCRRTAEICEHLKRDGLEDYIRSNTGLVIDPYFSGTKVKWILDHVEGSRERARRGELLFGTVDTWLIWKMTQGRVHVTDYTNASRTMLFNIHTLDWDDKMLEVLDIPREMLPEVRRSSEVYGQTNIGGKGGTRIPISGIAGDQQAALFGQLCVKEGMAKNTYGTGCFMLMNTGEKAVKSENGLLTTIACGPTGEVNYALEGAVFMAGASIQWLRDEMKLINDAYDSEYFATKVQNTNGVYVVPAFTGLGAPYWDPYARGAIFGLTRGVNANHIIRATLESIAYQTRDVLEAMQADSGIRLHALRVDGGAVANNFLMQFQSDILGTRVERPEVREVTALGAAYLAGLAVGFWQNLDELQEKAVIEREFRPGIETTERNYRYAGWKKAVKRAMAWEEHDE.

ADP is bound at residue Thr-14. ATP is bound by residues Thr-14, Thr-15, and Ser-16. Thr-14 is a sn-glycerol 3-phosphate binding site. Residue Arg-18 coordinates ADP. Sn-glycerol 3-phosphate is bound by residues Arg-84, Glu-85, Tyr-136, and Asp-246. The glycerol site is built by Arg-84, Glu-85, Tyr-136, Asp-246, and Gln-247. Residues Thr-268 and Gly-311 each contribute to the ADP site. ATP-binding residues include Thr-268, Gly-311, Gln-315, and Gly-412. Residues Gly-412 and Asn-416 each contribute to the ADP site.

Belongs to the FGGY kinase family. As to quaternary structure, homotetramer and homodimer (in equilibrium). Heterodimer with EIIA-Glc. Binds 1 zinc ion per glycerol kinase EIIA-Glc dimer. The zinc ion is important for dimerization.

It catalyses the reaction glycerol + ATP = sn-glycerol 3-phosphate + ADP + H(+). It functions in the pathway polyol metabolism; glycerol degradation via glycerol kinase pathway; sn-glycerol 3-phosphate from glycerol: step 1/1. Its activity is regulated as follows. Activity of this regulatory enzyme is affected by several metabolites. Allosterically and non-competitively inhibited by fructose 1,6-bisphosphate (FBP) and unphosphorylated phosphocarrier protein EIIA-Glc (III-Glc), an integral component of the bacterial phosphotransferase (PTS) system. Functionally, key enzyme in the regulation of glycerol uptake and metabolism. Catalyzes the phosphorylation of glycerol to yield sn-glycerol 3-phosphate. This is Glycerol kinase from Escherichia coli (strain ATCC 8739 / DSM 1576 / NBRC 3972 / NCIMB 8545 / WDCM 00012 / Crooks).